The following is a 266-amino-acid chain: ATP synthase subunit a (266 aa).

The next 6 membrane-spanning stretches (helical) occupy residues 38 to 58, 99 to 119, 126 to 146, 162 to 182, 191 to 211, and 224 to 244; these read KQML…ILAA, LLFS…IPVI, HVGG…IIGI, GVPW…NFLV, LFAT…GIEF, and SVLV…IMAL.

This sequence belongs to the ATPase A chain family. F-type ATPases have 2 components, CF(1) - the catalytic core - and CF(0) - the membrane proton channel. CF(1) has five subunits: alpha(3), beta(3), gamma(1), delta(1), epsilon(1). CF(0) has three main subunits: a(1), b(2) and c(9-12). The alpha and beta chains form an alternating ring which encloses part of the gamma chain. CF(1) is attached to CF(0) by a central stalk formed by the gamma and epsilon chains, while a peripheral stalk is formed by the delta and b chains.

The protein localises to the cell membrane. Functionally, key component of the proton channel; it plays a direct role in the translocation of protons across the membrane. The sequence is that of ATP synthase subunit a from Paenarthrobacter aurescens (strain TC1).